Here is a 167-residue protein sequence, read N- to C-terminus: RNA pyrophosphohydrolase (167 aa).

The Nudix hydrolase domain occupies 7-160 (PYRPCVGVMV…KRRAYEEVVA (154 aa)). A Nudix box motif is present at residues 48–69 (GGIDEGEDPLEAACRELYEETG).

The protein belongs to the Nudix hydrolase family. RppH subfamily. Requires a divalent metal cation as cofactor.

Accelerates the degradation of transcripts by removing pyrophosphate from the 5'-end of triphosphorylated RNA, leading to a more labile monophosphorylated state that can stimulate subsequent ribonuclease cleavage. This chain is RNA pyrophosphohydrolase, found in Rhizobium meliloti (strain 1021) (Ensifer meliloti).